A 424-amino-acid polypeptide reads, in one-letter code: Probable ribonuclease FAU-1 (424 aa).

It belongs to the FAU-1 family.

Its function is as follows. Probable RNase involved in rRNA stability through maturation and/or degradation of precursor rRNAs. Binds to RNA in loop regions with AU-rich sequences. This is Probable ribonuclease FAU-1 from Saccharolobus islandicus (strain Y.G.57.14 / Yellowstone #1) (Sulfolobus islandicus).